Here is a 449-residue protein sequence, read N- to C-terminus: Aspartyl protease AED3 (449 aa).

Positions 1–23 (MASSSLHFFFFLTLLLPFTFTTA) are cleaved as a signal peptide. The 341-residue stretch at 104–444 (YVVRAKLGTP…DVPNSRIGIA (341 aa)) folds into the Peptidase A1 domain. The active site involves Asp122. Cys132 and Cys138 form a disulfide bridge. 5 N-linked (GlcNAc...) asparagine glycosylation sites follow: Asn140, Asn148, Asn184, Asn211, and Asn297. The active site involves Asp328. N-linked (GlcNAc...) asparagine glycosylation is present at Asn353. Cys366 and Cys405 are joined by a disulfide.

This sequence belongs to the peptidase A1 family.

Its subcellular location is the secreted. It is found in the extracellular space. The protein localises to the apoplast. The sequence is that of Aspartyl protease AED3 from Arabidopsis thaliana (Mouse-ear cress).